The sequence spans 691 residues: Beta-galactosidase III (691 aa).

Positions 121 and 159 each coordinate substrate. The Proton donor role is filled by Glu160. Glu318 functions as the Nucleophile in the catalytic mechanism. Residues Trp326 and 366-369 (EKWH) contribute to the substrate site.

Belongs to the glycosyl hydrolase 42 family.

It carries out the reaction Hydrolysis of terminal non-reducing beta-D-galactose residues in beta-D-galactosides.. Specific for beta-D-anomer-linked galactoside substrates. Hydrolyzes o-nitrophenyl-beta-D-galactopyranoside (ONPG), chromogen 5-bromo-4-chloro-3-indolyl-beta-D-galactopyranoside (X-gal) and to a lesser extent lactose. Hydrolyzes p-nitrophenyl-beta-D-galacturonide very slightly. Does not hydrolyze maltose, sucrose, raffinose or melibiose. Has some transgalactosylation activity yielding galacto-oligosaccharides (GaOS), including O-beta-D-galactopyranosyl-(1,3)-O-beta-D-galactopyranosyl-(1-4)-D-glucopyranose. The sequence is that of Beta-galactosidase III from Bifidobacterium longum subsp. infantis.